A 97-amino-acid chain; its full sequence is Defensin-like protein 245 (97 aa).

Residues Met1–Gly24 form the signal peptide. Intrachain disulfides connect Cys39–Cys96, Cys50–Cys79, Cys58–Cys89, and Cys77–Cys91.

It belongs to the DEFL family. As to expression, flower buds and roots.

It localises to the secreted. The polypeptide is Defensin-like protein 245 (SCRL4) (Arabidopsis thaliana (Mouse-ear cress)).